The primary structure comprises 130 residues: MAATVKKTGSKKSKRNVPNGVVHIQSTFNNTIVSITDTSGHVISWSSAGASGFKGARKGTPFAAQTAAEAAARRALDQGMRQIEVLVRGPGAGRETAIRALQVAGLEITLIRDVTPLPHNGCRRPKRRRV.

It belongs to the universal ribosomal protein uS11 family. As to quaternary structure, part of the 30S ribosomal subunit. Interacts with proteins S7 and S18. Binds to IF-3.

Located on the platform of the 30S subunit, it bridges several disparate RNA helices of the 16S rRNA. Forms part of the Shine-Dalgarno cleft in the 70S ribosome. The chain is Small ribosomal subunit protein uS11 from Prochlorococcus marinus (strain AS9601).